The chain runs to 808 residues: MDRQSVVKSTAIPFPLNFDNEKYDDMYKAYNKIMVLARDLNAFIETPEFVFIGKDGNGKSALIESFIGFPMMIGEGSSLRPLHITLMNNARCEEPIVTFKRDRSLDSYEFDRQIELSMVSSEISKRNQKTSIPIEITIEYRYYLNMLLIEPPSVSIQPTNAITIQGQSMTSPANQLANKIAKLSIGNEMGEMITQYTKSNNRTLVFVETSTNGGTNSSEMLELAKKLDYKLDRSIFVFNKFHSLLTGDQPFTNGRDANRFLGSPSIGAPTFFTTLPSTAQRSQCNSKDQLSQLCDQLQQTDLNILEQLQFDKKYERNVGLSAFRHWISEFTWRKYLDSVPEVLKRLNSFRTTSEDQLYQIRQQLERTNAVTLRQIANSYVSIEFIQCIEKLVTRTLEGNPSLNGQTLEEEKSQDETGDWYDHNGKPILLLNDEKLVTFYDNKLYGGQQFERLLTEFKCITEVIQLEELSISEVACAIGSNRPSNASVIAWAASDLAQKKIKEALLPLVDQLFKRATYILRRLVDIVDRMIENKKKSSFRRHGNSTSLFQDNSSPSSQSQSQSSSISQSASLSSENMIYGIQSINGSDSVSRPSHENTIVNVEDHPYFIYSVKEMYFKYVDQIAADCKNKCMDEFYTTRLIYWDLQSNKDLKKFCTDSPCVSLNNSLNNNNKSTTPGNNNNNNNNNSNNNYNNSNHILNPKETHTMVTELASKLFQDIRNRMSKNIMLKCYNYFLIPMQMDLKLNIQDNITKLSDAMLEEIFEIQTTKERLREDEQHLAQICNQFIQQEENYKKYSQSFSHPFPSAVRN.

The Dynamin-type G domain maps to 43–340; the sequence is FIETPEFVFI…TWRKYLDSVP (298 aa). Residues 53–60 are G1 motif; that stretch reads GKDGNGKS. Residue 53 to 60 coordinates GTP; the sequence is GKDGNGKS. The segment at 79 to 80 is G2 motif; the sequence is LR. The G3 motif stretch occupies residues 150–153; that stretch reads EPPS. Residues 150-154 and 239-242 contribute to the GTP site; these read EPPSV and NKFH. Residues 239–242 are G4 motif; that stretch reads NKFH. The tract at residues 276–279 is G5 motif; the sequence is PSTA. 2 disordered regions span residues 536–565 and 665–695; these read SSFR…SSSI and SLNN…NSNH. Low complexity-rich tracts occupy residues 552–565 and 665–694; these read SSPS…SSSI and SLNN…NNSN.

This sequence belongs to the TRAFAC class dynamin-like GTPase superfamily. Dynamin/Fzo/YdjA family.

Its subcellular location is the cytoplasm. It catalyses the reaction GTP + H2O = GDP + phosphate + H(+). Involved in cytokinesis. May hydrolyze GTP. The sequence is that of Dynamin-like protein B (dlpB) from Dictyostelium discoideum (Social amoeba).